A 412-amino-acid chain; its full sequence is Early growth response protein 2b (412 aa).

Residues 269–299 (YTPQNLPLRPILRPRKYPNRPSKTPVHERPY) form a disordered region. 3 consecutive C2H2-type zinc fingers follow at residues 299 to 323 (YPCP…IRIH), 329 to 351 (FQCR…IRTH), and 357 to 379 (FACD…TKIH). Residues 371–412 (ERKRHTKIHLRQKERKSSSSSTGVSSSERGVATSICSSSSNQ) form a disordered region. Basic residues predominate over residues 374-384 (RHTKIHLRQKE). Positions 388–401 (SSSSTGVSSSERGV) are enriched in low complexity.

This sequence belongs to the EGR C2H2-type zinc-finger protein family.

The protein resides in the nucleus. In terms of biological role, sequence-specific DNA-binding transcription factor. Binds to two specific DNA sites located in the promoter region of HOXA4. This is Early growth response protein 2b (egr2b) from Danio rerio (Zebrafish).